Reading from the N-terminus, the 356-residue chain is 4-hydroxy-2-oxovalerate aldolase (356 aa).

The 251-residue stretch at 7–257 (PRVTDTTLRD…NPGLDVFKLM (251 aa)) folds into the Pyruvate carboxyltransferase domain. 15–16 (RD) contacts substrate. Position 16 (aspartate 16) interacts with Mn(2+). Histidine 19 serves as the catalytic Proton acceptor. Substrate contacts are provided by serine 169 and histidine 196. Residues histidine 196 and histidine 198 each contribute to the Mn(2+) site. Position 287 (tyrosine 287) interacts with substrate.

This sequence belongs to the 4-hydroxy-2-oxovalerate aldolase family.

The catalysed reaction is (S)-4-hydroxy-2-oxopentanoate = acetaldehyde + pyruvate. The sequence is that of 4-hydroxy-2-oxovalerate aldolase from Thermomicrobium roseum (strain ATCC 27502 / DSM 5159 / P-2).